The following is a 219-amino-acid chain: ATP-dependent dethiobiotin synthetase BioD (219 aa).

Residue 12–17 (DLGKTH) coordinates ATP. A Mg(2+)-binding site is contributed by Thr16. Residue Lys37 is part of the active site. Ser41 serves as a coordination point for substrate. Residues Asp52, 115 to 118 (EGAG), and 175 to 176 (SE) each bind ATP. 2 residues coordinate Mg(2+): Asp52 and Glu115.

The protein belongs to the dethiobiotin synthetase family. Homodimer. It depends on Mg(2+) as a cofactor.

It is found in the cytoplasm. The enzyme catalyses (7R,8S)-7,8-diammoniononanoate + CO2 + ATP = (4R,5S)-dethiobiotin + ADP + phosphate + 3 H(+). It functions in the pathway cofactor biosynthesis; biotin biosynthesis; biotin from 7,8-diaminononanoate: step 1/2. Catalyzes a mechanistically unusual reaction, the ATP-dependent insertion of CO2 between the N7 and N8 nitrogen atoms of 7,8-diaminopelargonic acid (DAPA, also called 7,8-diammoniononanoate) to form a ureido ring. The sequence is that of ATP-dependent dethiobiotin synthetase BioD from Caulobacter vibrioides (strain ATCC 19089 / CIP 103742 / CB 15) (Caulobacter crescentus).